The following is a 135-amino-acid chain: Transcription antitermination protein NusB (135 aa).

Residues 115 to 135 (ATPAESTGRGSAVDSIPGQPS) form a disordered region.

The protein belongs to the NusB family.

In terms of biological role, involved in transcription antitermination. Required for transcription of ribosomal RNA (rRNA) genes. Binds specifically to the boxA antiterminator sequence of the ribosomal RNA (rrn) operons. This Frankia casuarinae (strain DSM 45818 / CECT 9043 / HFP020203 / CcI3) protein is Transcription antitermination protein NusB.